The chain runs to 754 residues: 5-methyltetrahydropteroyltriglutamate--homocysteine methyltransferase (754 aa).

Residues arginine 17 to lysine 20 and lysine 117 contribute to the 5-methyltetrahydropteroyltri-L-glutamate site. L-homocysteine is bound by residues isoleucine 431–serine 433 and glutamate 484. L-methionine is bound by residues isoleucine 431–serine 433 and glutamate 484. Residues arginine 515–cysteine 516 and tryptophan 561 each bind 5-methyltetrahydropteroyltri-L-glutamate. Aspartate 599 is a binding site for L-homocysteine. Residue aspartate 599 participates in L-methionine binding. Glutamate 605 contributes to the 5-methyltetrahydropteroyltri-L-glutamate binding site. Zn(2+)-binding residues include histidine 641, cysteine 643, and glutamate 665. Residue histidine 694 is the Proton donor of the active site. Zn(2+) is bound at residue cysteine 726.

This sequence belongs to the vitamin-B12 independent methionine synthase family. It depends on Zn(2+) as a cofactor.

The enzyme catalyses 5-methyltetrahydropteroyltri-L-glutamate + L-homocysteine = tetrahydropteroyltri-L-glutamate + L-methionine. Its pathway is amino-acid biosynthesis; L-methionine biosynthesis via de novo pathway; L-methionine from L-homocysteine (MetE route): step 1/1. Functionally, catalyzes the transfer of a methyl group from 5-methyltetrahydrofolate to homocysteine resulting in methionine formation. The chain is 5-methyltetrahydropteroyltriglutamate--homocysteine methyltransferase from Pectobacterium atrosepticum (strain SCRI 1043 / ATCC BAA-672) (Erwinia carotovora subsp. atroseptica).